Reading from the N-terminus, the 132-residue chain is Small ribosomal subunit protein uS8 (132 aa).

Belongs to the universal ribosomal protein uS8 family. Part of the 30S ribosomal subunit. Contacts proteins S5 and S12.

One of the primary rRNA binding proteins, it binds directly to 16S rRNA central domain where it helps coordinate assembly of the platform of the 30S subunit. In Xylella fastidiosa (strain M23), this protein is Small ribosomal subunit protein uS8.